The sequence spans 311 residues: GTP cyclohydrolase FolE2 (311 aa).

It belongs to the GTP cyclohydrolase IV family.

It carries out the reaction GTP + H2O = 7,8-dihydroneopterin 3'-triphosphate + formate + H(+). Its pathway is cofactor biosynthesis; 7,8-dihydroneopterin triphosphate biosynthesis; 7,8-dihydroneopterin triphosphate from GTP: step 1/1. In terms of biological role, converts GTP to 7,8-dihydroneopterin triphosphate. This is GTP cyclohydrolase FolE2 from Xanthomonas campestris pv. campestris (strain B100).